Consider the following 332-residue polypeptide: Fructose-1,6-bisphosphatase class 1 (332 aa).

Residues glutamate 89, aspartate 110, leucine 112, and aspartate 113 each contribute to the Mg(2+) site. Residues 113–116 (DGSS), asparagine 206, tyrosine 239, 257–259 (YLY), and lysine 269 each bind substrate. Residue glutamate 275 participates in Mg(2+) binding.

It belongs to the FBPase class 1 family. In terms of assembly, homotetramer. Mg(2+) is required as a cofactor.

It is found in the cytoplasm. It catalyses the reaction beta-D-fructose 1,6-bisphosphate + H2O = beta-D-fructose 6-phosphate + phosphate. The protein operates within carbohydrate biosynthesis; gluconeogenesis. The polypeptide is Fructose-1,6-bisphosphatase class 1 (Salmonella typhi).